The chain runs to 296 residues: CTD kinase subunit gamma (296 aa).

Residues R25 to N44 form a disordered region. Residues T29–S39 are compositionally biased toward low complexity. T35 carries the post-translational modification Phosphothreonine.

This sequence belongs to the CTK3 family. As to quaternary structure, CTDK-I consists of three subunits, CTK1, CTK2 and CTK3 (also called alpha, beta and gamma). Interacts with CTK1. Heterodimerization with CTK2 is required to protect this subunit from degradation. Ubiquitinated. Ubiquitination leads to degradation by the 26S proteasome pathway.

It is found in the nucleus. The protein localises to the nucleolus. The protein resides in the cytoplasm. Functionally, gamma subunit of the CTDK-I complex, which hyperphosphorylates the C-terminal heptapeptide repeat domain (CTD) of the largest RNA polymerase II subunit. CTDK-I phosphorylates 'Ser-5' if the CTD substrate is not phosphorylated at 'Ser-5', but will phosphorylate 'Ser-2' of a CTD substrate if 'Ser-5' is already phosphorylated. CTDK-I is also more reactive toward substrates that are prephosphorylated at 'Ser-2' or 'Ser-5' compared with an unphosphorylated CTD substrate, therefore efficiently creating doubly phosphorylated CTD repeats. Involved in RNA polymerase I transcription and RNA polymerase II transcriptional elongation, and as part of the CTDK-I complex, pre-mRNA 3'-end processing and SET2 mediated H3K36 methylation. Together with CTK2, required for CTK1 CTD kinase activation. Required for DNA damage induced transcription. Involved in the adaptation to alternative carbon sources, including galactose, glycerol and ethanol, but not raffinose. Required for the integrity of the rDNA locus. This Saccharomyces cerevisiae (strain ATCC 204508 / S288c) (Baker's yeast) protein is CTD kinase subunit gamma (CTK3).